The sequence spans 218 residues: DNA endonuclease I-CeuI (218 aa).

Mg(2+)-binding residues include glycine 65 and glutamate 66. The interval 71–75 (ISTKK) is interaction with DNA. Aspartate 86 contributes to the Mg(2+) binding site. 3 interaction with DNA regions span residues 90 to 94 (NVTQH), 114 to 116 (RHK), and 191 to 199 (KQQGQSNEG).

It belongs to the LAGLIDADG endonuclease family. In terms of assembly, homodimer. Mg(2+) serves as cofactor.

Its subcellular location is the plastid. The protein resides in the chloroplast. Its function is as follows. Endonuclease involved in intron homing. Recognizes a degenerate sequence of 17-19 bp to produce a staggered cut 5 bp downstream from the CeLSU.5 intron insertion site. This chain is DNA endonuclease I-CeuI, found in Chlamydomonas moewusii (Chlamydomonas eugametos).